The following is a 93-amino-acid chain: MTEEHVVYIGKKPVMNYVLAVITQFHEGAKEVSIKARGRAISRAVDVAEIVRNRFLKDDVDVKEIKIGTEELPTADGRTTNTSTIEIVLARKT.

At lysine 11 the chain carries N6-acetyllysine.

This sequence belongs to the histone-like Alba family. Post-translationally, acetylated. Acetylation at Lys-11 decreases DNA-binding affinity.

It is found in the cytoplasm. The protein localises to the chromosome. Binds double-stranded DNA tightly but without sequence specificity. Involved in DNA compaction. The protein is DNA/RNA-binding protein Alba of Pyrococcus horikoshii (strain ATCC 700860 / DSM 12428 / JCM 9974 / NBRC 100139 / OT-3).